A 554-amino-acid polypeptide reads, in one-letter code: Zinc finger protein syd-9 (554 aa).

3 C2H2-type zinc fingers span residues 20 to 43, 65 to 87, and 93 to 116; these read LTCP…QMFH, FICE…RSVH, and YVCK…LKHH. Disordered regions lie at residues 136-158, 298-319, and 342-383; these read KIVT…TATP, SPDT…PPMA, and ASGQ…CPSP. The segment covering 142 to 158 has biased composition (low complexity); that stretch reads NGPTTNGSTPTTSTATP. 2 stretches are compositionally biased toward polar residues: residues 351-360 and 370-379; these read PDSTDTQKGC and SDPSTSSGDS. Residues 387–410 form a C2H2-type 4 zinc finger; sequence LHCKECGTLVRKSSHLPIHMTMSH. The segment at 516 to 554 is disordered; the sequence is RMEMSLSPIKPFQQRFSRERSSSSSVERSPSRERSRSPL. Residues 544–554 are compositionally biased toward basic and acidic residues; sequence SPSRERSRSPL.

As to expression, expressed mainly in body wall muscles and ventral cord motoneurons.

Its subcellular location is the nucleus. It localises to the nucleus speckle. In terms of biological role, plays a role in regulating synaptic function, probably by modulation of endocytosis. May be dispensable in muscle for normal locomotion. May be involved in post-transcriptional mRNA processing, in parallel with unc-75. This Caenorhabditis elegans protein is Zinc finger protein syd-9.